The following is a 1222-amino-acid chain: ATP-dependent helicase/nuclease subunit A (1222 aa).

The region spanning 39 to 495 (QKRTAQQIEA…ILLKENFRSQ (457 aa)) is the UvrD-like helicase ATP-binding domain. An ATP-binding site is contributed by 60-67 (ASAGSGKT). The region spanning 524-810 (QLIAGSHAQT…NLMTIHKSKG (287 aa)) is the UvrD-like helicase C-terminal domain.

It belongs to the helicase family. AddA subfamily. As to quaternary structure, heterodimer of AddA and AddB/RexB. Requires Mg(2+) as cofactor.

It catalyses the reaction Couples ATP hydrolysis with the unwinding of duplex DNA by translocating in the 3'-5' direction.. The catalysed reaction is ATP + H2O = ADP + phosphate + H(+). Its function is as follows. The heterodimer acts as both an ATP-dependent DNA helicase and an ATP-dependent, dual-direction single-stranded exonuclease. Recognizes the chi site generating a DNA molecule suitable for the initiation of homologous recombination. The AddA nuclease domain is required for chi fragment generation; this subunit has the helicase and 3' -&gt; 5' nuclease activities. This chain is ATP-dependent helicase/nuclease subunit A, found in Streptococcus pyogenes serotype M6 (strain ATCC BAA-946 / MGAS10394).